The chain runs to 118 residues: MVIKKGEIMNEIISLVSLSVIFGAMLSGFATFRLTGMRLMPHFASLMIAFILTLASLFISNNIIGYLAIAFQVITPLTVCPTICNILKTQFQNTGIYSAHLALMGMMFILALGNVILF.

The next 4 membrane-spanning stretches (helical) occupy residues 12–32 (IISLVSLSVIFGAMLSGFATF), 39–59 (LMPHFASLMIAFILTLASLFI), 63–83 (IIGYLAIAFQVITPLTVCPTI), and 98–118 (SAHLALMGMMFILALGNVILF).

The protein localises to the cell membrane. This is an uncharacterized protein from Methanocaldococcus jannaschii (strain ATCC 43067 / DSM 2661 / JAL-1 / JCM 10045 / NBRC 100440) (Methanococcus jannaschii).